The primary structure comprises 316 residues: tRNA dimethylallyltransferase (316 aa).

14-21 (GPTAVGKT) serves as a coordination point for ATP. A substrate-binding site is contributed by 16–21 (TAVGKT). The interval 39–42 (DSMQ) is interaction with substrate tRNA.

The protein belongs to the IPP transferase family. In terms of assembly, monomer. It depends on Mg(2+) as a cofactor.

The catalysed reaction is adenosine(37) in tRNA + dimethylallyl diphosphate = N(6)-dimethylallyladenosine(37) in tRNA + diphosphate. Its function is as follows. Catalyzes the transfer of a dimethylallyl group onto the adenine at position 37 in tRNAs that read codons beginning with uridine, leading to the formation of N6-(dimethylallyl)adenosine (i(6)A). The chain is tRNA dimethylallyltransferase from Bacillus cytotoxicus (strain DSM 22905 / CIP 110041 / 391-98 / NVH 391-98).